Reading from the N-terminus, the 158-residue chain is Transcriptional regulator MraZ (158 aa).

2 SpoVT-AbrB domains span residues 7–66 and 95–138; these read KEQH…EPSV and LDCV…APEK.

Belongs to the MraZ family. In terms of assembly, forms oligomers.

The protein resides in the cytoplasm. The protein localises to the nucleoid. The sequence is that of Transcriptional regulator MraZ from Prosthecochloris aestuarii (strain DSM 271 / SK 413).